The sequence spans 286 residues: Light-independent protochlorophyllide reductase iron-sulfur ATP-binding protein (286 aa).

ATP-binding positions include Gly-10–Thr-15 and Lys-39. A Mg(2+)-binding site is contributed by Ser-14. [4Fe-4S] cluster contacts are provided by Cys-95 and Cys-129. Asn-180–Arg-181 serves as a coordination point for ATP.

The protein belongs to the NifH/BchL/ChlL family. In terms of assembly, homodimer. Protochlorophyllide reductase is composed of three subunits; ChlL, ChlN and ChlB. Requires [4Fe-4S] cluster as cofactor.

The catalysed reaction is chlorophyllide a + oxidized 2[4Fe-4S]-[ferredoxin] + 2 ADP + 2 phosphate = protochlorophyllide a + reduced 2[4Fe-4S]-[ferredoxin] + 2 ATP + 2 H2O. It functions in the pathway porphyrin-containing compound metabolism; chlorophyll biosynthesis (light-independent). Its function is as follows. Component of the dark-operative protochlorophyllide reductase (DPOR) that uses Mg-ATP and reduced ferredoxin to reduce ring D of protochlorophyllide (Pchlide) to form chlorophyllide a (Chlide). This reaction is light-independent. The L component serves as a unique electron donor to the NB-component of the complex, and binds Mg-ATP. The chain is Light-independent protochlorophyllide reductase iron-sulfur ATP-binding protein from Cyanothece sp. (strain PCC 7425 / ATCC 29141).